The following is a 408-amino-acid chain: Probable 2,3-bisphosphoglycerate-independent phosphoglycerate mutase (408 aa).

It belongs to the BPG-independent phosphoglycerate mutase family. A-PGAM subfamily.

The catalysed reaction is (2R)-2-phosphoglycerate = (2R)-3-phosphoglycerate. Its pathway is carbohydrate degradation; glycolysis; pyruvate from D-glyceraldehyde 3-phosphate: step 3/5. Functionally, catalyzes the interconversion of 2-phosphoglycerate and 3-phosphoglycerate. The protein is Probable 2,3-bisphosphoglycerate-independent phosphoglycerate mutase of Deinococcus geothermalis (strain DSM 11300 / CIP 105573 / AG-3a).